A 208-amino-acid polypeptide reads, in one-letter code: Small ribosomal subunit protein uS3 (208 aa).

Residues 38 to 106 (IRDYIKARLY…EILIDIQEVR (69 aa)) enclose the KH type-2 domain.

Belongs to the universal ribosomal protein uS3 family. As to quaternary structure, part of the 30S ribosomal subunit. Forms a tight complex with proteins S10 and S14.

Functionally, binds the lower part of the 30S subunit head. Binds mRNA in the 70S ribosome, positioning it for translation. The sequence is that of Small ribosomal subunit protein uS3 from Syntrophobacter fumaroxidans (strain DSM 10017 / MPOB).